The chain runs to 243 residues: Probable transcriptional regulatory protein BAV2207 (243 aa).

A disordered region spans residues 1–21 (MAGHSKWANIQHRKGRQDAKR).

The protein belongs to the TACO1 family.

Its subcellular location is the cytoplasm. In Bordetella avium (strain 197N), this protein is Probable transcriptional regulatory protein BAV2207.